Consider the following 643-residue polypeptide: Leukocyte immunoglobulin-like receptor subfamily B member 5 (643 aa).

A signal peptide spans 1–23; the sequence is MTLTLSVLICLGLNVGPRTCVQA. Topologically, residues 24-458 are extracellular; that stretch reads GTLPKPTLWA…PQSGLGRHLG (435 aa). Ig-like C2-type domains lie at 27 to 116, 111 to 228, 224 to 313, and 337 to 418; these read PKPT…LELV, DPLE…SLLI, PSLL…DPLD, and GENV…LVVS. A disulfide bridge connects residues C49 and C98. N-linked (GlcNAc...) asparagine glycosylation occurs at N139. Intrachain disulfides connect C144–C195 and C244–C295. N-linked (GlcNAc...) asparagine glycosylation is found at N279 and N339. C344 and C395 are joined by a disulfide. Positions 417–433 are enriched in low complexity; sequence VSGPSGDPSLSPTGSTP. Residues 417–449 form a disordered region; it reads VSGPSGDPSLSPTGSTPTPGPEDQPLTPTGLDP. The helical transmembrane segment at 459 to 479 threads the bilayer; that stretch reads VVTGVSVAFVLLLFLLLFLLL. Over 480–643 the chain is Cytoplasmic; the sequence is RHRHQSKHRT…PSIYAPLAIH (164 aa). Residues 493–643 are disordered; the sequence is FYRPAGAAGP…PSIYAPLAIH (151 aa). The residue at position 514 (S514) is a Phosphoserine. Composition is skewed to basic and acidic residues over residues 531-549, 557-567, and 579-592; these read TQPKDGAEMDARQSPRDED, EVKHSRPRREM, and LDTKDTQAEEDRQM. The short motif at 605-610 is the ITIM motif 1 element; sequence VTYAQL. Basic and acidic residues predominate over residues 615 to 631; sequence LRREATEPPPSQEREPP. The ITIM motif 2 signature appears at 635-640; that stretch reads SIYAPL.

The protein localises to the membrane. In terms of biological role, may act as receptor for class I MHC antigens. The polypeptide is Leukocyte immunoglobulin-like receptor subfamily B member 5 (LILRB5) (Pan troglodytes (Chimpanzee)).